The following is an 898-amino-acid chain: Probable LRR receptor-like serine/threonine-protein kinase At4g20450 (898 aa).

The first 24 residues, 1–24 (MEGIHKLIFLALIWIFLITNIVDA), serve as a signal peptide directing secretion. At 25–535 (QDQQGFISLD…TGPGNNKKKL (511 aa)) the chain is on the extracellular side. N-linked (GlcNAc...) asparagine glycosylation is found at asparagine 40, asparagine 52, asparagine 98, asparagine 247, asparagine 253, asparagine 420, asparagine 443, asparagine 465, asparagine 484, and asparagine 489. LRR repeat units lie at residues 455 to 477 (QLQK…LAKM), 479 to 501 (LLTF…LLNM), and 505 to 526 (GLIT…ESET). Residues 536–556 (LVPILASAASVGIIIAVLLLV) form a helical membrane-spanning segment. Over 557–898 (NILLLRKKKP…FGPEHIPDAR (342 aa)) the chain is Cytoplasmic. Threonine 582 carries the phosphothreonine modification. Residues 591 to 864 (NNFERPLGEG…QVANELQECL (274 aa)) form the Protein kinase domain. ATP contacts are provided by residues 597–605 (LGEGGFGVV) and lysine 619. Tyrosine 664 carries the post-translational modification Phosphotyrosine. Aspartate 716 functions as the Proton acceptor in the catalytic mechanism. Position 750 is a phosphoserine (serine 750). Threonine 751 bears the Phosphothreonine mark. Position 764 is a phosphotyrosine (tyrosine 764). The segment at 864–898 (LLTENSRKGGRHDVDSKSSLEQSTSFGPEHIPDAR) is disordered. A compositionally biased stretch (basic and acidic residues) spans 868–881 (NSRKGGRHDVDSKS).

It belongs to the protein kinase superfamily. Ser/Thr protein kinase family.

The protein resides in the membrane. It catalyses the reaction L-seryl-[protein] + ATP = O-phospho-L-seryl-[protein] + ADP + H(+). The enzyme catalyses L-threonyl-[protein] + ATP = O-phospho-L-threonyl-[protein] + ADP + H(+). This Arabidopsis thaliana (Mouse-ear cress) protein is Probable LRR receptor-like serine/threonine-protein kinase At4g20450.